Consider the following 180-residue polypeptide: Ribosome maturation factor RimM (180 aa).

Residues 104-177 enclose the PRC barrel domain; it reads PEEFHDHQLV…RVVVDPPGGL (74 aa).

Belongs to the RimM family. As to quaternary structure, binds ribosomal protein uS19.

It is found in the cytoplasm. Functionally, an accessory protein needed during the final step in the assembly of 30S ribosomal subunit, possibly for assembly of the head region. Essential for efficient processing of 16S rRNA. May be needed both before and after RbfA during the maturation of 16S rRNA. It has affinity for free ribosomal 30S subunits but not for 70S ribosomes. In Salinispora arenicola (strain CNS-205), this protein is Ribosome maturation factor RimM.